Consider the following 445-residue polypeptide: UPF0210 protein SPJ_0248 (445 aa).

Belongs to the UPF0210 family. As to quaternary structure, homodimer.

This chain is UPF0210 protein SPJ_0248, found in Streptococcus pneumoniae (strain JJA).